Reading from the N-terminus, the 181-residue chain is MSQRLKTLYQDSIVPKLTEQFGYSNVHEVPKLVKISVNRGLGEASSNAKAMESSIKELSTITGQRPVITRAKKAIAGFKIREGMPVGVMVTLRSEKMYSFLDRLISLALPRIRDFRGISPKSFDGRGNYSLGIREQLIFPEIDYDSIDQIRGMDISIITTARTDEEGRALLREMGMPFRES.

It belongs to the universal ribosomal protein uL5 family. In terms of assembly, part of the 50S ribosomal subunit; part of the 5S rRNA/L5/L18/L25 subcomplex. Contacts the 5S rRNA and the P site tRNA. Forms a bridge to the 30S subunit in the 70S ribosome.

Its function is as follows. This is one of the proteins that bind and probably mediate the attachment of the 5S RNA into the large ribosomal subunit, where it forms part of the central protuberance. In the 70S ribosome it contacts protein S13 of the 30S subunit (bridge B1b), connecting the 2 subunits; this bridge is implicated in subunit movement. Contacts the P site tRNA; the 5S rRNA and some of its associated proteins might help stabilize positioning of ribosome-bound tRNAs. In Picosynechococcus sp. (strain ATCC 27264 / PCC 7002 / PR-6) (Agmenellum quadruplicatum), this protein is Large ribosomal subunit protein uL5.